Reading from the N-terminus, the 617-residue chain is COMPASS component cclA (617 aa).

Low complexity-rich tracts occupy residues 1-19 (MASI…INSP) and 40-50 (SSPAPASNASA). The segment at 1–89 (MASIQPAGSS…AKKRATAVQN (89 aa)) is disordered. Positions 57–69 (SKRNKRDSRKKRE) are enriched in basic residues. Residues 157–380 (IADTSFPHIK…YAFNLKETPT (224 aa)) enclose the B30.2/SPRY domain. The disordered stretch occupies residues 595-617 (TPNTEEPAARPENITVGHDVEMS).

This sequence belongs to the cclA family. Component of the COMPASS complex.

The protein localises to the nucleus. The protein resides in the chromosome. It localises to the telomere. Component of the COMPASS (Set1C) complex that specifically mono-, di- and trimethylates histone H3 to form H3K4me1/2/3, which subsequently plays a role in telomere length maintenance and transcription elongation regulation. Controls the production of several secondary metabolites, including astellolides. The protein is COMPASS component cclA of Aspergillus oryzae (strain ATCC 42149 / RIB 40) (Yellow koji mold).